The chain runs to 265 residues: MNNAFKDALKAGRPQIGLWLGLCSSYSAELLAGAGFDWLLIDGEHAPNNVPTVLTQLQAIAPYPSQPVVRPSWNDPVQIKQLLDVGAQTLLVPMVQNAEEARLAVRATRYPPAGIRGVGSALARASRWNRVPDYIHQANDAMCVLVQIETREALKNLPQILDVDGVDGVFIGPADLSADMGHGGNPQHPEVQAAIEDAIQQIRQAGKAPGILMANEQLAKRYLELGALFVAVGVDTTLLARGAEALAARFTHNATTTTDNNKSVY.

Residue histidine 45 is the Proton acceptor of the active site. A substrate-binding site is contributed by glutamine 147. Glutamate 149 contributes to the a divalent metal cation binding site. Substrate is bound by residues alanine 174 and aspartate 175. Aspartate 175 is an a divalent metal cation binding site.

Belongs to the HpcH/HpaI aldolase family. In terms of assembly, homohexamer; trimer of dimers. Requires a divalent metal cation as cofactor.

The catalysed reaction is 4-hydroxy-2-oxoheptanedioate = succinate semialdehyde + pyruvate. The protein operates within aromatic compound metabolism; 4-hydroxyphenylacetate degradation; pyruvate and succinate semialdehyde from 4-hydroxyphenylacetate: step 7/7. In terms of biological role, catalyzes the reversible retro-aldol cleavage of 4-hydroxy-2-ketoheptane-1,7-dioate (HKHD) to pyruvate and succinic semialdehyde. This Klebsiella pneumoniae subsp. pneumoniae (strain ATCC 700721 / MGH 78578) protein is 4-hydroxy-2-oxo-heptane-1,7-dioate aldolase.